The sequence spans 170 residues: Protein SprT (170 aa).

One can recognise a SprT-like domain in the interval 22–165 (LQLANQHLGT…RQCGEKLQFI (144 aa)). H78 contributes to the Zn(2+) binding site. E79 is a catalytic residue. Zn(2+) is bound at residue H82.

The protein belongs to the SprT family. It depends on Zn(2+) as a cofactor.

The protein resides in the cytoplasm. This chain is Protein SprT, found in Yersinia pseudotuberculosis serotype IB (strain PB1/+).